The sequence spans 1322 residues: FERM and PDZ domain-containing protein 4 (1322 aa).

In terms of domain architecture, WW spans 33–66 (QVPPYGWEMTANRDGRDYFINHMTQAIPFDDPRL). The 78-residue stretch at 78–155 (KVEMRRDPVL…SILLTVIQPY (78 aa)) folds into the PDZ domain. The FERM domain maps to 204-519 (NVLKVYLENG…GYYRLLVDSR (316 aa)). 7 disordered regions span residues 809–847 (APPP…EIPV), 900–927 (SPES…TAQK), 952–983 (EFPA…PPKV), 1027–1080 (RKSK…STFN), 1105–1148 (SGLE…GQGD), 1160–1180 (AKDL…PSKL), and 1207–1227 (HFSL…TGSS). The span at 902 to 921 (ESSSDSGNETNSSEMTESSE) shows a compositional bias: low complexity. The segment covering 1041–1054 (NGNTTGKKQQGTKT) has biased composition (low complexity). Positions 1067-1080 (TVSSRDSQHLSTFN) are enriched in polar residues. A compositionally biased stretch (polar residues) spans 1207 to 1217 (HFSLQSSQGSS).

In terms of assembly, interacts (via C-terminus) with DLG1, DLG2, DLG3 and DLG4/PSD95. Interacts (via N-terminus) with ARHGEF7; the interaction is mediated by the PDZ domain. Interacts with GPSM2 (via TPR repeat region).

The protein resides in the cell projection. Its subcellular location is the dendritic spine. Functionally, positive regulator of dendritic spine morphogenesis and density. Required for the maintenance of excitatory synaptic transmission. Binds phosphatidylinositol 4,5-bisphosphate. In Homo sapiens (Human), this protein is FERM and PDZ domain-containing protein 4 (FRMPD4).